An 81-amino-acid polypeptide reads, in one-letter code: MALAVLRLALLLLAVTFAGPLFRRFSKYKTPFCARYQLPGCPRDFNPVCGTDMITYPNECTLCMKIRESGQNIKILRRGPC.

The N-terminal stretch at 1–21 (MALAVLRLALLLLAVTFAGPL) is a signal peptide. A Kazal-like domain is found at 27-81 (KYKTPFCARYQLPGCPRDFNPVCGTDMITYPNECTLCMKIRESGQNIKILRRGPC). Intrachain disulfides connect cysteine 33–cysteine 63, cysteine 41–cysteine 60, and cysteine 49–cysteine 81.

As to expression, more abundant in epididymis than in testis.

Its subcellular location is the secreted. The protein resides in the cytoplasmic vesicle. The protein localises to the secretory vesicle. It localises to the acrosome. Functionally, strong inhibitor of acrosin in male and/or female genital tract. Also inhibits trypsin. In terms of biological role, as a strong inhibitor of acrosin, it is required for normal spermiogenesis. It probably hinders premature activation of proacrosin and other proteases, thus preventing the cascade of events leading to spermiogenesis defects. May be involved in the regulation of serine protease-dependent germ cell apoptosis. It also inhibits trypsin. This chain is Serine protease inhibitor Kazal-type 2 (SPINK2), found in Macaca fascicularis (Crab-eating macaque).